The primary structure comprises 189 residues: Elongation factor P (189 aa).

This sequence belongs to the elongation factor P family.

It is found in the cytoplasm. It participates in protein biosynthesis; polypeptide chain elongation. Functionally, involved in peptide bond synthesis. Stimulates efficient translation and peptide-bond synthesis on native or reconstituted 70S ribosomes in vitro. Probably functions indirectly by altering the affinity of the ribosome for aminoacyl-tRNA, thus increasing their reactivity as acceptors for peptidyl transferase. This is Elongation factor P from Campylobacter lari (strain RM2100 / D67 / ATCC BAA-1060).